The chain runs to 381 residues: Chaperone protein DnaJ (381 aa).

In terms of domain architecture, J spans 4–69 (DYYEILGVAR…EKRARYDQFG (66 aa)). The segment at 139–221 (GGEKELRVTR…CGGSGLVRKT (83 aa)) adopts a CR-type zinc-finger fold. Residues C152, C155, C169, C172, C195, C198, C209, and C212 each coordinate Zn(2+). CXXCXGXG motif repeat units lie at residues 152–159 (CGHCHGNG), 169–176 (CPTCQGRG), 195–202 (CSTCRGEG), and 209–216 (CRECGGSG).

This sequence belongs to the DnaJ family. Homodimer. It depends on Zn(2+) as a cofactor.

Its subcellular location is the cytoplasm. In terms of biological role, participates actively in the response to hyperosmotic and heat shock by preventing the aggregation of stress-denatured proteins and by disaggregating proteins, also in an autonomous, DnaK-independent fashion. Unfolded proteins bind initially to DnaJ; upon interaction with the DnaJ-bound protein, DnaK hydrolyzes its bound ATP, resulting in the formation of a stable complex. GrpE releases ADP from DnaK; ATP binding to DnaK triggers the release of the substrate protein, thus completing the reaction cycle. Several rounds of ATP-dependent interactions between DnaJ, DnaK and GrpE are required for fully efficient folding. Also involved, together with DnaK and GrpE, in the DNA replication of plasmids through activation of initiation proteins. This chain is Chaperone protein DnaJ, found in Carboxydothermus hydrogenoformans (strain ATCC BAA-161 / DSM 6008 / Z-2901).